Here is a 777-residue protein sequence, read N- to C-terminus: 1,4-alpha-glucan branching enzyme GlgB (777 aa).

Residue aspartate 408 is the Nucleophile of the active site. Residue glutamate 461 is the Proton donor of the active site.

It belongs to the glycosyl hydrolase 13 family. GlgB subfamily. In terms of assembly, monomer.

The catalysed reaction is Transfers a segment of a (1-&gt;4)-alpha-D-glucan chain to a primary hydroxy group in a similar glucan chain.. It participates in glycan biosynthesis; glycogen biosynthesis. Catalyzes the formation of the alpha-1,6-glucosidic linkages in glycogen by scission of a 1,4-alpha-linked oligosaccharide from growing alpha-1,4-glucan chains and the subsequent attachment of the oligosaccharide to the alpha-1,6 position. In Actinobacillus pleuropneumoniae serotype 7 (strain AP76), this protein is 1,4-alpha-glucan branching enzyme GlgB.